A 120-amino-acid chain; its full sequence is MFKFILLCFCINFAFSSPVIQFFIEDEIKLEQPQPIIITSKNKNLPQILFKNTYDNNNIENVGGSCYCTNYMGAIDQGITQMCCSSSGGKMSGNICISNWSSSGFGNCCKATGAYYGGCF.

Positions 1-16 (MFKFILLCFCINFAFS) are cleaved as a signal peptide.

This is an uncharacterized protein from Acheta domesticus (House cricket).